The sequence spans 363 residues: Homeobox protein DTH-2 (363 aa).

A DNA-binding region (homeobox) is located at residues 133–192; sequence RRKRRILFSQAQIYELERRFKQQKYLSAPEREHLANLINLTPTQVKIWFQNHRYKCKRSQ. Residues 189–246 are disordered; sequence KRSQKDKEKEQQKEKSYHLKKNIVDDKERSPNKQICNASSSDRSTPEEPVAKAKESGL. The span at 191–219 shows a compositional bias: basic and acidic residues; it reads SQKDKEKEQQKEKSYHLKKNIVDDKERSP. Residues 220–231 are compositionally biased toward polar residues; sequence NKQICNASSSDR. Basic and acidic residues predominate over residues 232-246; it reads STPEEPVAKAKESGL.

Belongs to the NK-2 homeobox family. In terms of tissue distribution, intestine and unidentified peripheral parenchymal cells. Slightly higher levels in the cephalic region compared to other body regions.

It localises to the nucleus. Its function is as follows. This protein might be involved in determination and/or differentiation of nerve cells in the continuous replacement of neurons in the cephalic region. This chain is Homeobox protein DTH-2 (DTH-2), found in Girardia tigrina (Planarian).